Here is a 126-residue protein sequence, read N- to C-terminus: Defensin-like protein 183 (126 aa).

An N-terminal signal peptide occupies residues 1-26 (MEKALSLVVFIIFSIMLASVENKVNA). Disulfide bonds link Cys-29/Cys-68, Cys-36/Cys-55, Cys-39/Cys-62, Cys-43/Cys-64, Cys-80/Cys-126, Cys-91/Cys-111, Cys-96/Cys-120, and Cys-100/Cys-122.

Belongs to the DEFL family.

The protein resides in the secreted. In Arabidopsis thaliana (Mouse-ear cress), this protein is Defensin-like protein 183 (LCR19).